Here is a 479-residue protein sequence, read N- to C-terminus: Shugoshin (479 aa).

Residues 36–76 (SLRIRSLESEVSNLLSENVSLREQIITLTQELERFEAARTL) are a coiled coil. 3 disordered regions span residues 109–145 (SRAV…GFLD), 220–247 (EHSL…QADT), and 263–479 (AKRK…SMPP). Basic and acidic residues predominate over residues 123-132 (QSRESGPKEV). Acidic residues predominate over residues 270–286 (EDDESLFESSPSEDDEF). 2 stretches are compositionally biased toward polar residues: residues 290–303 (RPAQ…QNEH) and 318–328 (QSPTLSSQNDH). 2 stretches are compositionally biased toward basic and acidic residues: residues 335-352 (PQSE…RVLE) and 379-388 (GYNEKSEKPL). Polar residues predominate over residues 400 to 411 (KNASPKKSSTRT).

The protein belongs to the shugoshin family.

It localises to the nucleus. Its subcellular location is the chromosome. The protein localises to the centromere. Its function is as follows. Plays a central role in chromosome cohesion during cell division by preventing premature dissociation of cohesin complex from centromeres after prophase, when most of cohesin complex dissociates from chromosomes arms. This Emericella nidulans (strain FGSC A4 / ATCC 38163 / CBS 112.46 / NRRL 194 / M139) (Aspergillus nidulans) protein is Shugoshin (sgo1).